Reading from the N-terminus, the 497-residue chain is Ankyrin repeat domain-containing protein 53 (497 aa).

Basic residues predominate over residues 1–10; that stretch reads MRRPSRRRSK. Residues 1 to 65 form a disordered region; that stretch reads MRRPSRRRSK…VSSPNSESSQ (65 aa). The segment covering 12-27 has biased composition (low complexity); the sequence is STPPRSHTTPRRTGPS. A compositionally biased stretch (basic and acidic residues) spans 28-39; the sequence is DSRRRPGTKEQP. ANK repeat units follow at residues 110 to 140, 144 to 177, and 181 to 210; these read KGFTAIHFAAQKCQLSCLKVLIEEYKYPVDL, KGQTPLHLVIHKNNKSDILPCIDYLLKKGAAINS, and NGSTPLHLASCNGLLGCIKLLVQSGANVHA. The stretch at 239–264 forms a coiled coil; that stretch reads WKHDKKVLAQEMEKLRTLKEKLTILE.

As to quaternary structure, interacts with PSRC1; recruited by PSRC1 to the spindle during mitosis. Post-translationally, phosphorylated during mitosis.

The protein resides in the cytoplasm. It is found in the cytoskeleton. It localises to the spindle. Its subcellular location is the spindle pole. In terms of biological role, required for normal progression through mitosis. Involved in chromosome alignment and cytokinesis via regulation of microtubules polymerization. This is Ankyrin repeat domain-containing protein 53 (Ankrd53) from Mus musculus (Mouse).